Here is a 565-residue protein sequence, read N- to C-terminus: Liver carboxylesterase 1 (565 aa).

The signal sequence occupies residues 1 to 18; that stretch reads MWLCALSLISLTACLSLG. The cysteines at positions 87 and 116 are disulfide-linked. S221 functions as the Acyl-ester intermediate in the catalytic mechanism. A disulfide bridge links C273 with C284. E353 serves as the catalytic Charge relay system. Position 378 is a phosphoserine (S378). N388 is a glycosylation site (N-linked (GlcNAc...) asparagine). H466 serves as the catalytic Charge relay system. N489 carries an N-linked (GlcNAc...) asparagine glycan.

The protein belongs to the type-B carboxylesterase/lipase family. As to quaternary structure, homotrimer and homohexamer. Binds to beta-glucuronidase. In terms of tissue distribution, detected in kidney, liver and lung.

The protein resides in the endoplasmic reticulum lumen. It localises to the cytoplasm. It is found in the lipid droplet. It catalyses the reaction a carboxylic ester + H2O = an alcohol + a carboxylate + H(+). The enzyme catalyses cholesteryl (9Z-octadecenoate) + H2O = cholesterol + (9Z)-octadecenoate + H(+). The catalysed reaction is 2-(5Z,8Z,11Z,14Z-eicosatetraenoyl)-glycerol + H2O = glycerol + (5Z,8Z,11Z,14Z)-eicosatetraenoate + H(+). It carries out the reaction prostaglandin E2 1-glyceryl ester + H2O = prostaglandin E2 + glycerol + H(+). It catalyses the reaction a cholesterol ester + H2O = cholesterol + a fatty acid + H(+). The enzyme catalyses prostaglandin F2alpha 1-glyceryl ester + H2O = prostaglandin F2alpha + glycerol + H(+). Functionally, involved in the detoxification of xenobiotics and in the activation of ester and amide prodrugs. Hydrolyzes aromatic and aliphatic esters, but has no catalytic activity toward amides or a fatty acyl-CoA ester. Displays fatty acid ethyl ester synthase activity, catalyzing the ethyl esterification of oleic acid to ethyloleate. Converts monoacylglycerides to free fatty acids and glycerol. Hydrolyzes of 2-arachidonoylglycerol and prostaglandins. Hydrolyzes cellular cholesteryl esters to free cholesterols and promotes reverse cholesterol transport (RCT) by facilitating both the initial and final steps in the process. First of all, allows free cholesterol efflux from macrophages to extracellular cholesterol acceptors and secondly, releases free cholesterol from lipoprotein-delivered cholesteryl esters in the liver for bile acid synthesis or direct secretion into the bile. The polypeptide is Liver carboxylesterase 1 (Mus musculus (Mouse)).